The chain runs to 457 residues: Polygalacturonase-2 (457 aa).

Residues 1–24 (MVIQRNSILLLIIIFASSISTCRS) form the signal peptide. Residues 25–71 (NVIDDNLFKQVYDNILEQEFAHDFQAYLSYLSKNIESNNNIDKVDKN) constitute a propeptide that is removed on maturation. N-linked (GlcNAc...) asparagine glycosylation is found at Asn189 and Asn240. PbH1 repeat units follow at residues 228–255 (SCTNVVASNLMINASAKSPNTDGVHVSN) and 256–277 (TQYIQISDTIIGTGDDCISIVS). Asp270 functions as the Proton donor in the catalytic mechanism. N-linked (GlcNAc...) asparagine glycosylation is present at Asn286. His293 is a catalytic residue. PbH1 repeat units lie at residues 309–330 (VSNVTVNEAKIIGAENGVRIKT) and 338–359 (ASNIKFLNVEMQDVKYPIIIDQ). The N-linked (GlcNAc...) asparagine glycan is linked to Asn311. Positions 445–457 (LEISEDEALLYNY) are excised as a propeptide.

This sequence belongs to the glycosyl hydrolase 28 family. As to quaternary structure, monomer PG2 (isoenzymes PG2A and PG2B). Also forms heterodimers called polygalacturonase 1 (PG1) with the beta subunit GP1. In terms of processing, N-glycosylated. PG2B isozyme has a greater degree of glycosylation than PG2A. As to expression, expressed only in ripening fruits (at protein level).

The protein resides in the secreted. It localises to the extracellular space. Its subcellular location is the apoplast. It is found in the cell wall. The enzyme catalyses (1,4-alpha-D-galacturonosyl)n+m + H2O = (1,4-alpha-D-galacturonosyl)n + (1,4-alpha-D-galacturonosyl)m.. Its function is as follows. Catalytic subunit of the polygalacturonase isozyme 1 and 2 (PG1 and PG2). Acts in concert with the pectinesterase, in the ripening process. Is involved in cell wall metabolism, specifically in polyuronide degradation. The depolymerization and solubilization of cell wall polyuronides mediated by PG2 during ripening seems to be limited by the beta subunit GP1, probably by recruiting PG2 to form PG1. This Solanum lycopersicum (Tomato) protein is Polygalacturonase-2 (PG2).